The chain runs to 429 residues: Adenylosuccinate synthetase (429 aa).

GTP is bound by residues 12–18 and 40–42; these read GDEGKGK and GHT. Asp-13 functions as the Proton acceptor in the catalytic mechanism. Residues Asp-13 and Gly-40 each contribute to the Mg(2+) site. Residues 13 to 16, 38 to 41, Thr-129, Arg-143, Gln-223, Thr-238, and Arg-302 contribute to the IMP site; these read DEGK and NAGH. His-41 serves as the catalytic Proton donor. 298 to 304 provides a ligand contact to substrate; it reads VVTGRKR. GTP is bound by residues Arg-304, 330–332, and 412–414; these read KLD and STS.

This sequence belongs to the adenylosuccinate synthetase family. Homodimer. Mg(2+) is required as a cofactor.

The protein resides in the cytoplasm. It catalyses the reaction IMP + L-aspartate + GTP = N(6)-(1,2-dicarboxyethyl)-AMP + GDP + phosphate + 2 H(+). The protein operates within purine metabolism; AMP biosynthesis via de novo pathway; AMP from IMP: step 1/2. Functionally, plays an important role in the de novo pathway of purine nucleotide biosynthesis. Catalyzes the first committed step in the biosynthesis of AMP from IMP. This is Adenylosuccinate synthetase from Brucella anthropi (strain ATCC 49188 / DSM 6882 / CCUG 24695 / JCM 21032 / LMG 3331 / NBRC 15819 / NCTC 12168 / Alc 37) (Ochrobactrum anthropi).